The following is a 322-amino-acid chain: Transcription factor IIIA (322 aa).

C2H2-type zinc fingers lie at residues 12–36 (FVCSFLNCKASFSKAWKLEAHYCKH), 42–64 (FACDRCDKTFCTRCQLTRHNLSH), 70–95 (YQCLEDGCSESFISTAGLKNHVERVH), 102–126 (YVCDYEGCAKEFRKKKQLRSHKCEH), 132–156 (FECQYEGCGKKYTTSKKLQKHEKVH), 159–184 (YPCAEEGCDFQGRMWTEYQAHRKAAH), 188–211 (LQCDSCAKVFHKAWFLKKHKLFVH), 218–243 (FKCTKEGCQKTYTTHFNLQNHILSFH), and 249–273 (FICPHDGCGKAFAMEGSLKRHAVVH). The tract at residues 272 to 322 (VHDPQKKKLQKKTKRGRKKKLEPKTNVSDDSELPAQLHGLSLNTSTSQNNP) is disordered. Residues 278-292 (KKLQKKTKRGRKKKL) show a composition bias toward basic residues. Residues 312–322 (SLNTSTSQNNP) are compositionally biased toward polar residues.

Its subcellular location is the nucleus. Involved in ribosomal large subunit biogenesis. Interacts with the internal control region (ICR) of approximately 50 bases within the 5S RNA genes, is required for correct transcription of these genes by RNA polymerase III. Also binds the transcribed 5S RNA's. This is Transcription factor IIIA (gtf3a) from Ictalurus punctatus (Channel catfish).